Consider the following 442-residue polypeptide: Large ribosomal subunit protein mL65 (442 aa).

Belongs to the mitochondrion-specific ribosomal protein mL65 family. In terms of assembly, component of the mitochondrial ribosome small subunit (28S) which comprises a 12S rRNA and about 30 distinct proteins.

It localises to the mitochondrion. The sequence is that of Large ribosomal subunit protein mL65 (Mrps30) from Mus musculus (Mouse).